The chain runs to 1052 residues: Lateral signaling target protein 2 homolog (1052 aa).

5 disordered regions span residues 311–348 (YSSI…TSPH), 379–455 (PSML…DSDS), 506–539 (DEFG…STSA), 551–678 (LRLP…ASSF), and 814–973 (NTID…IPDG). Low complexity-rich tracts occupy residues 312 to 346 (SSIE…STTS), 379 to 392 (PSML…TPTA), and 400 to 419 (PSHS…NPPA). The segment covering 422–455 (SEDDDDDDEEREDDEEECGMLDSDEQDLNDDSDS) has biased composition (acidic residues). Over residues 554 to 574 (PSSSSENEQTTGSNQQSTIKT) the composition is skewed to polar residues. A phosphoserine mark is found at serine 555 and serine 556. 2 stretches are compositionally biased toward basic residues: residues 588 to 614 (RQRH…HHQQ) and 625 to 644 (SHHH…ARKR). Polar residues predominate over residues 652-661 (STTAEQQQTI). Over residues 824–842 (NNNNNNNNNSGSSSSSNSS) the composition is skewed to low complexity. Serine 854 is modified (phosphoserine). A compositionally biased stretch (low complexity) spans 872–915 (QQQQQQQAQLQLQMQRQRNNSVGSNSPSSSSSSSSSSEHNSPIS). Positions 926-935 (SNSASMPSIG) are enriched in polar residues. The segment covering 936–963 (STATTAAATAAATATTTTSATTTTTTTT) has biased composition (low complexity). The FYVE-type zinc finger occupies 972–1032 (DGKAPRCMSC…VCRECYVREV (61 aa)). The Zn(2+) site is built by cysteine 978, cysteine 981, cysteine 994, cysteine 997, cysteine 1002, cysteine 1005, cysteine 1024, and cysteine 1027.

This sequence belongs to the lst-2 family.

In terms of biological role, negative regulator of epidermal growth factor receptor (EGFR) signaling. This chain is Lateral signaling target protein 2 homolog, found in Drosophila virilis (Fruit fly).